Reading from the N-terminus, the 384-residue chain is Outer membrane protein assembly factor BamC (384 aa).

The N-terminal stretch at 1-23 is a signal peptide; sequence MNKLNSVVVARGAVAVLLIGLAG. Cys-24 carries N-palmitoyl cysteine lipidation. Cys-24 carries S-diacylglycerol cysteine lipidation. Disordered stretches follow at residues 47-70 and 251-273; these read LEVP…TSGK and QAAQ…SGTL.

The protein belongs to the BamC family. Part of the Bam complex.

The protein resides in the cell outer membrane. Part of the outer membrane protein assembly complex, which is involved in assembly and insertion of beta-barrel proteins into the outer membrane. This Accumulibacter regalis protein is Outer membrane protein assembly factor BamC.